An 84-amino-acid polypeptide reads, in one-letter code: Capsid protein G8P (84 aa).

The first 29 residues, Met-1–Ala-29, serve as a signal peptide directing secretion. The Periplasmic portion of the chain corresponds to Ala-30–Gln-58. The chain crosses the membrane as a helical span at residues Thr-59–Phe-76. Topologically, residues Lys-77–Val-84 are cytoplasmic.

It belongs to the inovirus capsid protein family. In terms of assembly, homomultimerizes. There are several thousands of this protein in the phage capsid.

It localises to the virion. It is found in the host membrane. Its function is as follows. Self assembles to form a helical capsid wrapping up the viral genomic DNA. The capsid displays a filamentous structure with a length of 760-1950 nm and a width of 6-8 nm. The virion assembly and budding take place at the host inner membrane. This is Capsid protein G8P (VIII) from Escherichia coli (Bacteriophage I2-2).